The chain runs to 158 residues: SsrA-binding protein (158 aa).

Belongs to the SmpB family.

The protein localises to the cytoplasm. In terms of biological role, required for rescue of stalled ribosomes mediated by trans-translation. Binds to transfer-messenger RNA (tmRNA), required for stable association of tmRNA with ribosomes. tmRNA and SmpB together mimic tRNA shape, replacing the anticodon stem-loop with SmpB. tmRNA is encoded by the ssrA gene; the 2 termini fold to resemble tRNA(Ala) and it encodes a 'tag peptide', a short internal open reading frame. During trans-translation Ala-aminoacylated tmRNA acts like a tRNA, entering the A-site of stalled ribosomes, displacing the stalled mRNA. The ribosome then switches to translate the ORF on the tmRNA; the nascent peptide is terminated with the 'tag peptide' encoded by the tmRNA and targeted for degradation. The ribosome is freed to recommence translation, which seems to be the essential function of trans-translation. This chain is SsrA-binding protein, found in Pseudoalteromonas atlantica (strain T6c / ATCC BAA-1087).